The sequence spans 160 residues: Ribosomal RNA large subunit methyltransferase H (160 aa).

L76 and G108 together coordinate S-adenosyl-L-methionine.

This sequence belongs to the RNA methyltransferase RlmH family. In terms of assembly, homodimer.

Its subcellular location is the cytoplasm. The enzyme catalyses pseudouridine(1915) in 23S rRNA + S-adenosyl-L-methionine = N(3)-methylpseudouridine(1915) in 23S rRNA + S-adenosyl-L-homocysteine + H(+). Specifically methylates the pseudouridine at position 1915 (m3Psi1915) in 23S rRNA. The protein is Ribosomal RNA large subunit methyltransferase H of Afipia carboxidovorans (strain ATCC 49405 / DSM 1227 / KCTC 32145 / OM5) (Oligotropha carboxidovorans).